The sequence spans 504 residues: Pentatricopeptide repeat-containing protein At1g09220, mitochondrial (504 aa).

The transit peptide at 1–87 directs the protein to the mitochondrion; the sequence is MFLFSSRRIT…FLFNPLLRCY (87 aa). 10 PPR repeats span residues 76–110, 120–156, 157–187, 188–222, 223–253, 255–289, 291–321, 324–358, 359–390, and 396–430; these read KLFLFNPLLRCYSLGETPLHAYFLYDQLQRLHFLS, DSFTYLFLLKASSNPRFPSLLLGIGLHGLTLKLGFES, HVYVQTALVGMYLVGGNMIDAHKVFDEMPER, NPVTWNVMITGLTNLGDFEKALCFLEKMPNRTVVS, WTTIIDGYARVDKPKEAILLFSRMVACDAIK, NEITILAILPAVWNLGDLKMCGSVHAYVGKRGFVP, DIRVTNSLIDAYAKCGCIQSAFKFFIEIPNG, NLVSWTTMISAFAIHGMGKEAVSMFKDMERLGLKP, NRVTMISVLNACSHGGLAEEEFLEFFNTMVNE, and DVKHYGCLVDMLRRKGRLEEAEKIALEIPIEEKAV. Positions 431–504 are type E motif; degenerate; sequence VWRMLLGACS…AKLPGHSQVT (74 aa).

Belongs to the PPR family. PCMP-E subfamily.

Its subcellular location is the mitochondrion. This chain is Pentatricopeptide repeat-containing protein At1g09220, mitochondrial (PCMP-E25), found in Arabidopsis thaliana (Mouse-ear cress).